The following is a 659-amino-acid chain: Cyclic-di-AMP phosphodiesterase GdpP (659 aa).

Residues 1–8 are Cytoplasmic-facing; that stretch reads MPSFYEKP. 2 helical membrane-spanning segments follow: residues 9–29 and 30–50; these read LFRYPIYALIALSIITILISF and YFNWILGTVEVLLLAVILFFI. Over 51–659 the chain is Cytoplasmic; sequence KRADSLIRQE…DEYFEGGVQR (609 aa). Positions 84 to 149 are PAS-like domain, required for heme-binding; it reads PIGIMLFNDQ…NDRKFRVVIK (66 aa). Residues 173-301 enclose the GGDEF domain; that stretch reads ERTVLAYIFL…GGDQVAIKLP (129 aa). A DHH domain region spans residues 339 to 496; it reads NVIIMGHKFP…IEATALLAGI (158 aa). Mn(2+)-binding residues include histidine 345, aspartate 349, aspartate 351, aspartate 420, histidine 444, and aspartate 499. Positions 591-646 are DHHA1 domain; sequence FAVARRDEQTVCISARSLGEVNVQIIMEALEGGGHLTNAATQLSGISVSEALERLK.

Belongs to the GdpP/PdeA phosphodiesterase family. Heme b is required as a cofactor. Mg(2+) serves as cofactor. It depends on Mn(2+) as a cofactor.

The protein resides in the cell membrane. The enzyme catalyses 3',3'-c-di-AMP + H2O = 5'-O-phosphonoadenylyl-(3'-&gt;5')-adenosine + H(+). Phosphodiesterase (PDE) inhibited by Zn(2+), Ca(2+) inhibits in the presence of Mg(2+) but not Mn(2+); c-di-AMP PDE activity is competitively inhibited by ppGpp. Heme binding (by Fe(2+) or Fe(3+) heme) inhibits PDE, activity is partially restored by KCN or NO only for Fe(2+) heme. Binding of NO to Fe(2+) heme switches from hexa- to pentacoordination. Heme binding inhibits the ATPase activity. Functionally, has phosphodiesterase (PDE) activity against cyclic-di-AMP (c-di-AMP) and to a much lesser extent against cyclic-di-GMP (c-di-GMP) in the DHH/DHHA1 domains. Also has ATPase activity, probably via the GGDEF domain. Overexpression leads to increased sensitivity to methyl methanesulfonate (MMS) and H(2)O(2). Overexpression leads to extreme sensitivity to the beta-lactam antibiotic cefuroxime (CEF), probably dependent on PDE activity. May monitor cellular heme or NO levels. In B.subtilis c-di-AMP is a second messenger that mediates growth, DNA repair and cell wall homeostasis; it is toxic when present in excess. This is Cyclic-di-AMP phosphodiesterase GdpP from Bacillus subtilis (strain 168).